We begin with the raw amino-acid sequence, 269 residues long: C-type lectin domain family 1 member A (269 aa).

The Cytoplasmic segment spans residues 1–51; the sequence is MQAKYSSTRDMLDDDDTTISLYSGTSTVTRRAEPRHSENGTPSSVWRPVAL. A helical; Signal-anchor for type II membrane protein transmembrane segment spans residues 52-72; it reads TLLTLCLVLLVGLAALGLVFF. Topologically, residues 73-269 are extracellular; the sequence is QFYQLSNIQQ…AGRVVPGELQ (197 aa). N-linked (GlcNAc...) asparagine glycans are attached at residues Asn94, Asn126, Asn168, and Asn202. A C-type lectin domain is found at 143 to 257; it reads YGDKCYQFYK…CKELRRCACE (115 aa). Intrachain disulfides connect Cys164–Cys256 and Cys235–Cys248.

The protein localises to the membrane. The chain is C-type lectin domain family 1 member A (Clec1a) from Mus musculus (Mouse).